A 302-amino-acid polypeptide reads, in one-letter code: uncharacterized protein (302 aa).

Disordered regions lie at residues 1–167 (MPCR…QSSE) and 180–199 (PSLC…QRAS). Over residues 39 to 54 (EESHAPSRDPRDHQGS) the composition is skewed to basic and acidic residues. Polar residues-rich tracts occupy residues 123-133 (LSTSSCASVSR) and 183-197 (CPSQ…SPQR).

This is an uncharacterized protein from Homo sapiens (Human).